We begin with the raw amino-acid sequence, 545 residues long: Esterase-5B (545 aa).

The signal sequence occupies residues 1–19; the sequence is MYCEKLILLLGCFWISSSA. An intrachain disulfide couples cysteine 84 to cysteine 103. An N-linked (GlcNAc...) asparagine glycan is attached at asparagine 113. Serine 207 acts as the Acyl-ester intermediate in catalysis. Cysteine 259 and cysteine 271 are joined by a disulfide. An N-linked (GlcNAc...) asparagine glycan is attached at asparagine 421. Catalysis depends on histidine 467, which acts as the Charge relay system. Residue asparagine 507 is glycosylated (N-linked (GlcNAc...) asparagine). A disulfide bridge connects residues cysteine 515 and cysteine 536.

It belongs to the type-B carboxylesterase/lipase family. Homodimer.

The protein resides in the secreted. It carries out the reaction a carboxylic ester + H2O = an alcohol + a carboxylate + H(+). The sequence is that of Esterase-5B (Est-5B) from Drosophila miranda (Fruit fly).